Reading from the N-terminus, the 172-residue chain is MEEYAREPCPWRIVDDCGGAFTMGVIGGGVFQAIKGFRNAPVGIRHRLRGSANAVRIRAPQIGGSFAVWGGLFSTIDCGLVRLRGKEDPWNSITSGALTGAVLAARSGPLAMVGSAMMGGILLALIEGVGILLTRYTAQQFRNAPPFLEDPSQLPPKDGTPAPGYPSYQQYH.

Residues Cys9 and Cys78 are joined by a disulfide bond. Helical transmembrane passes span Cys17–Phe37, Gln61–Asp77, and Val113–Leu133. The segment at Pro146–His172 is disordered.

Belongs to the Tim17/Tim22/Tim23 family. Component of the TIM23 complex at least composed of TIMM23, TIMM17 (TIMM17A or TIMM17B) and TIMM50. The complex interacts with the TIMM44 component of the PAM complex and with DNAJC15. In terms of processing, forms one disulfide bond. In terms of tissue distribution, expression is abundant in heart and skeletal muscle, intermediate in brain, and weak in pancreas, placenta, kidney and liver.

It is found in the mitochondrion inner membrane. Functionally, essential component of the TIM23 complex, a complex that mediates the translocation of transit peptide-containing proteins across the mitochondrial inner membrane. This chain is Mitochondrial import inner membrane translocase subunit Tim17-B (TIMM17B), found in Homo sapiens (Human).